A 100-amino-acid polypeptide reads, in one-letter code: SAGA-associated factor 11 (100 aa).

An SGF11-type zinc finger spans residues 73–94 (FQCENCGRSIAGGRFAQHMTKC).

This sequence belongs to the SGF11 family. As to quaternary structure, component of the 1.8 MDa SAGA transcription coactivator-HAT complex. SAGA is built of 5 distinct domains with specialized functions. Within the SAGA complex, SUS1, SGF11, SGF73 and UBP8 form an additional subcomplex of SAGA called the DUB module (deubiquitination module). Interacts directly with SGF73, SUS1 and UBP8.

The protein localises to the nucleus. Functions as a component of the transcription regulatory histone acetylation (HAT) complex SAGA. At the promoters, SAGA is required for recruitment of the basal transcription machinery. It influences RNA polymerase II transcriptional activity through different activities such as TBP interaction and promoter selectivity, interaction with transcription activators, and chromatin modification through histone acetylation and deubiquitination. SAGA acetylates nucleosomal histone H3 to some extent (to form H3K9ac, H3K14ac, H3K18ac and H3K23ac). SAGA interacts with DNA via upstream activating sequences (UASs). Involved in transcriptional regulation of a subset of SAGA-regulated genes. Within the SAGA complex, participates in a subcomplex, that specifically deubiquitinates histones H2B. The protein is SAGA-associated factor 11 of Debaryomyces hansenii (strain ATCC 36239 / CBS 767 / BCRC 21394 / JCM 1990 / NBRC 0083 / IGC 2968) (Yeast).